The following is a 465-amino-acid chain: Sperm microtubule associated protein 2-like (465 aa).

The span at 1–29 (MENQEFLSSSAPSEVTDGQVSTEISTCSE) shows a compositional bias: polar residues. Residues 1–140 (MENQEFLSSS…REAKETELLP (140 aa)) form a disordered region. 2 stretches are compositionally biased toward basic and acidic residues: residues 40–70 (LDTHRELEESEDPEKHENPEEPEEVREQDQR) and 114–137 (KAREPRQLRHTREPRKSREAKETE). THEG repeat units lie at residues 174–192 (RKCFSSRKRTPNLSKPKKQ), 214–233 (GALKAQLTKRLENLAQPKEV), 260–279 (PALFRQPSKRIQRLSQPNGF), 297–316 (SLRISDPSPRILQLSVAKGT), 333–352 (STLSAIATPRIIELAHPRIK), 373–392 (AAMIAKPSPRTIALAKSKSV), 409–428 (ATTHSKASPRIQELANPNKR), and 446–465 (AALKAQCSQRIWELSQPLTR).

The sequence is that of Sperm microtubule associated protein 2-like from Homo sapiens (Human).